Reading from the N-terminus, the 122-residue chain is MIQMQTILDVADNSGAKKLFCIKVLGGSKRKYAGIGDIIVASVKEAIPNSKVKKGDVVKAVVVRTAKEIGRPDGSYIRFDGNSGVVINNQKEPVGTRIFGPVARELRAKKFMKIISLAPEVL.

The protein belongs to the universal ribosomal protein uL14 family. Part of the 50S ribosomal subunit. Forms a cluster with proteins L3 and L19. In the 70S ribosome, L14 and L19 interact and together make contacts with the 16S rRNA in bridges B5 and B8.

Binds to 23S rRNA. Forms part of two intersubunit bridges in the 70S ribosome. The polypeptide is Large ribosomal subunit protein uL14 (Geotalea daltonii (strain DSM 22248 / JCM 15807 / FRC-32) (Geobacter daltonii)).